A 288-amino-acid polypeptide reads, in one-letter code: MKRDITQLLSPELSQSSSRNDKKRKPTNSNKKVQTVLNFPSSSPNASQSTTCPTCGMTYYSHVSKDNDVHNKYHFNFINGIPWPTSFCNNVLERFIVVDHTTGKAKGTSKSKKSQAASKETLVMTIDRRASKQVKRVEEILKVVNGELNAASDGKAWQKDHKGPIQGRAFIVVIDGRAIGICTTEPIQDVDQQCRWIIHRTQALVPNQVNRSIKLGISRIWIAPKWRRYGLARRLLDIVLVHSVYGIVLDKKEIGFSQPSFSGGLLAKSFNGVTHKSGEILIPVYLEE.

The interval 1-50 (MKRDITQLLSPELSQSSSRNDKKRKPTNSNKKVQTVLNFPSSSPNASQST) is disordered. The segment covering 7–18 (QLLSPELSQSSS) has biased composition (low complexity). The segment covering 27–50 (TNSNKKVQTVLNFPSSSPNASQST) has biased composition (polar residues). The CCHH-type zinc-finger motif lies at 50-74 (TTCPTCGMTYYSHVSKDNDVHNKYH).

The protein belongs to the acetyltransferase family. ECO subfamily.

The protein localises to the nucleus. Its function is as follows. Probable acetyltransferase required for the establishment of sister chromatid cohesion and couple the processes of cohesion and DNA replication to ensure that only sister chromatids become paired together. In contrast to the structural cohesins, the deposition and establishment factors are required only during S phase. Acts by acetylating the cohesin complex component SMC3. The protein is N-acetyltransferase ECO1 (ECO1) of Debaryomyces hansenii (strain ATCC 36239 / CBS 767 / BCRC 21394 / JCM 1990 / NBRC 0083 / IGC 2968) (Yeast).